Reading from the N-terminus, the 244-residue chain is tRNA pseudouridine synthase B (244 aa).

The active-site Nucleophile is D46.

This sequence belongs to the pseudouridine synthase TruB family. Type 1 subfamily.

It carries out the reaction uridine(55) in tRNA = pseudouridine(55) in tRNA. Responsible for synthesis of pseudouridine from uracil-55 in the psi GC loop of transfer RNAs. This chain is tRNA pseudouridine synthase B, found in Bordetella parapertussis (strain 12822 / ATCC BAA-587 / NCTC 13253).